The following is a 147-amino-acid chain: uncharacterized protein (147 aa).

A disordered region spans residues 51 to 72; that stretch reads VTSSMSVMNDSEECPLINGPSM.

This is an uncharacterized protein from Gallid herpesvirus 2 (strain GA) (GaHV-2).